Reading from the N-terminus, the 919-residue chain is Synphilin-1 (919 aa).

Disordered regions lie at residues 80–99 (SPLKHQPETLENNESDDQKN), 108–140 (GGESDLGPQPQELGPGDGVGGPPGKSSEPSTSL), and 287–313 (SSAAESKPEEQVSGLNRTSSQGPEERS). Polar residues predominate over residues 299–308 (SGLNRTSSQG). ANK repeat units lie at residues 349–380 (NGNNLLHIAASQGHAECLQHLTSLMGEDCLNE), 384–413 (EKLTPAGLAIKNGQLECVRWMVSETEAIAE), 419–448 (DFPSLIHYAGCYGQEKILLWLLQFMQEQGI), and 456–485 (DGNSAVHVASQHGYLGCIQTLVEYGANVTM). A coiled-coil region spans residues 515 to 552 (CMSLASQVVKLTKQLKEQTVERVTLQNQLQQFLEAQKS). Disordered regions lie at residues 549–615 (AQKS…KDED), 666–713 (RLRQ…SMDS), and 728–919 (SGGR…NKAA). The segment covering 555–571 (KSLPSSPSSPSSPASRK) has biased composition (low complexity). One copy of the ANK 5 repeat lies at 603–632 (ASSRARPKAKDEDSDKILRQLLGKEISENV). Low complexity predominate over residues 667–685 (LRQLMQRSLSESDTDSNNS). Residues 686 to 700 (EDPKTTPVRKADRPR) show a composition bias toward basic and acidic residues. The ANK 6 repeat unit spans residues 699-729 (PRPQPIVESVESMDSAESLHLMIKKHTLASG). Low complexity predominate over residues 774–785 (PSGDPQQPSPDS). Positions 833–842 (NGEKDKDKGR) are enriched in basic and acidic residues. The segment covering 844-854 (LQRTSTSNESG) has biased composition (polar residues). Residues 874 to 886 (NQNNNNNYQAANQ) are compositionally biased toward low complexity.

Homodimer. Heterodimer of isoform 1 and isoform 2. Interacts with SIAH1, SIAH2, SNCA, RNF19A and PRKN. Isoform 2 has a strong tendency to form aggregates and can sequester isoform 1. Post-translationally, ubiquitinated; mediated by SIAH1, SIAH2 or RNF19A and leading to its subsequent proteasomal degradation. In the absence of proteasomal degradation, ubiquitinated SNCAIP accumulates in cytoplasmic inclusion bodies. Isoform 2 is subject to limited ubiquitination that does not lead to proteasomal degradation. In terms of tissue distribution, detected in brain (at protein level). Widely expressed, with highest levels in brain, heart and placenta.

It localises to the cytoplasm. Isoform 2 inhibits the ubiquitin ligase activity of SIAH1 and inhibits proteasomal degradation of target proteins. Isoform 2 inhibits autoubiquitination and proteasomal degradation of SIAH1, and thereby increases cellular levels of SIAH. Isoform 2 modulates SNCA monoubiquitination by SIAH1. The polypeptide is Synphilin-1 (SNCAIP) (Homo sapiens (Human)).